The following is a 228-amino-acid chain: uncharacterized protein (228 aa).

A coiled-coil region spans residues 196-228 (VKITELLDKAKISINDLNKTIEKLNETVNKYHG).

This is an uncharacterized protein from Acanthamoeba polyphaga (Amoeba).